A 99-amino-acid polypeptide reads, in one-letter code: NADH-quinone oxidoreductase subunit K (99 aa).

Transmembrane regions (helical) follow at residues 3-23, 28-48, and 62-82; these read PENY…GVLL, IVVF…FVTF, and FFTM…IMII.

Belongs to the complex I subunit 4L family. In terms of assembly, NDH-1 is composed of 14 different subunits. Subunits NuoA, H, J, K, L, M, N constitute the membrane sector of the complex.

The protein localises to the cell membrane. It carries out the reaction a quinone + NADH + 5 H(+)(in) = a quinol + NAD(+) + 4 H(+)(out). NDH-1 shuttles electrons from NADH, via FMN and iron-sulfur (Fe-S) centers, to quinones in the respiratory chain. The immediate electron acceptor for the enzyme in this species is believed to be a menaquinone. Couples the redox reaction to proton translocation (for every two electrons transferred, four hydrogen ions are translocated across the cytoplasmic membrane), and thus conserves the redox energy in a proton gradient. This Rhodococcus erythropolis (strain PR4 / NBRC 100887) protein is NADH-quinone oxidoreductase subunit K.